We begin with the raw amino-acid sequence, 24 residues long: Flavin reductase (NADPH) (24 aa).

NADP(+) contacts are provided by Gly-9, Thr-11, Gly-12, and Thr-14.

It belongs to the BLVRB family. As to quaternary structure, monomer. As to expression, detected in erythrocytes (at protein level).

The protein resides in the cytoplasm. It carries out the reaction reduced riboflavin + NADP(+) = riboflavin + NADPH + 2 H(+). The enzyme catalyses bilirubin IXbeta + NADP(+) = biliverdin IXbeta + NADPH + H(+). It catalyses the reaction FMNH2 + NAD(+) = FMN + NADH + 2 H(+). The catalysed reaction is FMNH2 + NADP(+) = FMN + NADPH + 2 H(+). It carries out the reaction S-nitroso-CoA + L-cysteinyl-[protein] = S-nitroso-L-cysteinyl-[protein] + CoA. The enzyme catalyses L-cysteinyl-[SCAN] + S-nitroso-CoA = S-nitroso-L-cysteinyl-[SCAN] + CoA. It catalyses the reaction S-nitroso-L-cysteinyl-[SCAN] + L-cysteinyl-[protein] = L-cysteinyl-[SCAN] + S-nitroso-L-cysteinyl-[protein]. Functionally, enzyme that can both act as a NAD(P)H-dependent reductase and a S-nitroso-CoA-dependent nitrosyltransferase. Promotes fetal heme degradation during development. Also expressed in adult tissues, where it acts as a regulator of hematopoiesis, intermediary metabolism (glutaminolysis, glycolysis, TCA cycle and pentose phosphate pathway) and insulin signaling. Has a broad specificity oxidoreductase activity by catalyzing the NAD(P)H-dependent reduction of a variety of flavins, such as riboflavin, FAD or FMN, biliverdins, methemoglobin and PQQ (pyrroloquinoline quinone). Contributes to fetal heme catabolism by catalyzing reduction of biliverdin IXbeta into bilirubin IXbeta in the liver. Biliverdin IXbeta, which constitutes the major heme catabolite in the fetus is not present in adult. Does not reduce bilirubin IXalpha. Can also reduce the complexed Fe(3+) iron to Fe(2+) in the presence of FMN and NADPH. Acts as a protein nitrosyltransferase by catalyzing nitrosylation of cysteine residues of target proteins, such as HMOX2, INSR and IRS1. S-nitroso-CoA-dependent nitrosyltransferase activity is mediated via a 'ping-pong' mechanism: BLVRB first associates with both S-nitroso-CoA and protein substrate, nitric oxide group is then transferred from S-nitroso-CoA to Cys residues of BLVRB and from S-nitroso-BLVRB to the protein substrate. Inhibits insulin signaling by mediating nitrosylation of INSR and IRS1, leading to their inhibition. This chain is Flavin reductase (NADPH) (BLVRB), found in Aquarana catesbeiana (American bullfrog).